Here is a 409-residue protein sequence, read N- to C-terminus: Phosphatidylserine decarboxylase proenzyme, mitochondrial (409 aa).

Residues 1–52 (MATSVGHRCLGLLHGVAPWRSSLHPCEITALSQSLQPLRKLPFRAFRTDARK) constitute a mitochondrion transit peptide. Topologically, residues 53–63 (IHTAPARTMFL) are mitochondrial matrix. Residues 64-82 (LRPVPILLATGGGYAGYRQ) form a helical membrane-spanning segment. At 83-409 (YEKYRERELE…IRFGEALGSL (327 aa)) the chain is on the mitochondrial intermembrane side. Residues Asp191, His267, and Ser378 each act as charge relay system; for autoendoproteolytic cleavage activity in the active site. Ser378 functions as the Schiff-base intermediate with substrate; via pyruvic acid; for decarboxylase activity in the catalytic mechanism. Position 378 is a pyruvic acid (Ser); by autocatalysis (Ser378).

Belongs to the phosphatidylserine decarboxylase family. PSD-B subfamily. Eukaryotic type I sub-subfamily. In terms of assembly, heterodimer of a large membrane-associated beta subunit and a small pyruvoyl-containing alpha subunit. It depends on pyruvate as a cofactor. In terms of processing, is synthesized initially as an inactive proenzyme. Formation of the active enzyme involves a self-maturation process in which the active site pyruvoyl group is generated from an internal serine residue via an autocatalytic post-translational modification. Two non-identical subunits are generated from the proenzyme in this reaction, and the pyruvate is formed at the N-terminus of the alpha chain, which is derived from the carboxyl end of the proenzyme. The autoendoproteolytic cleavage occurs by a canonical serine protease mechanism, in which the side chain hydroxyl group of the serine supplies its oxygen atom to form the C-terminus of the beta chain, while the remainder of the serine residue undergoes an oxidative deamination to produce ammonia and the pyruvoyl prosthetic group on the alpha chain. During this reaction, the Ser that is part of the protease active site of the proenzyme becomes the pyruvoyl prosthetic group, which constitutes an essential element of the active site of the mature decarboxylase.

The protein localises to the mitochondrion inner membrane. It is found in the lipid droplet. The protein resides in the cytoplasm. The catalysed reaction is a 1,2-diacyl-sn-glycero-3-phospho-L-serine + H(+) = a 1,2-diacyl-sn-glycero-3-phosphoethanolamine + CO2. The protein operates within phospholipid metabolism; phosphatidylethanolamine biosynthesis. In terms of biological role, catalyzes the formation of phosphatidylethanolamine (PtdEtn) from phosphatidylserine (PtdSer). Plays a central role in phospholipid metabolism and in the interorganelle trafficking of phosphatidylserine. May be involved in lipid droplet biogenesis at the endoplasmic reticulum membrane. This chain is Phosphatidylserine decarboxylase proenzyme, mitochondrial, found in Pongo abelii (Sumatran orangutan).